The chain runs to 68 residues: MSLEMRIVELETRQAFQDDTIQALNDEVVEQSRVIERLQLQVAELIKRYEEMVGQYAGGGEEPPPPHY.

It belongs to the SlyX family.

The chain is Protein SlyX homolog from Pseudomonas entomophila (strain L48).